The sequence spans 621 residues: Chaperone protein HscA homolog (621 aa).

It belongs to the heat shock protein 70 family.

In terms of biological role, chaperone involved in the maturation of iron-sulfur cluster-containing proteins. Has a low intrinsic ATPase activity which is markedly stimulated by HscB. In Polynucleobacter asymbioticus (strain DSM 18221 / CIP 109841 / QLW-P1DMWA-1) (Polynucleobacter necessarius subsp. asymbioticus), this protein is Chaperone protein HscA homolog.